A 292-amino-acid chain; its full sequence is 33 kDa chaperonin (292 aa).

2 cysteine pairs are disulfide-bonded: C230-C232 and C263-C266.

The protein belongs to the HSP33 family. Under oxidizing conditions two disulfide bonds are formed involving the reactive cysteines. Under reducing conditions zinc is bound to the reactive cysteines and the protein is inactive.

The protein localises to the cytoplasm. Its function is as follows. Redox regulated molecular chaperone. Protects both thermally unfolding and oxidatively damaged proteins from irreversible aggregation. Plays an important role in the bacterial defense system toward oxidative stress. The sequence is that of 33 kDa chaperonin from Sodalis glossinidius (strain morsitans).